The chain runs to 200 residues: Fibrillarin-like rRNA/tRNA 2'-O-methyltransferase (200 aa).

Residues 62-63 (TT), 78-79 (EF), 103-104 (DA), and 123-126 (DVAQ) each bind S-adenosyl-L-methionine.

Belongs to the methyltransferase superfamily. Fibrillarin family. In terms of assembly, interacts with nop5. Component of box C/D small ribonucleoprotein (sRNP) particles that contain rpl7ae, FlpA and nop5, plus a guide RNA.

In terms of biological role, involved in pre-rRNA and tRNA processing. Utilizes the methyl donor S-adenosyl-L-methionine to catalyze the site-specific 2'-hydroxyl methylation of ribose moieties in rRNA and tRNA. Site specificity is provided by a guide RNA that base pairs with the substrate. Methylation occurs at a characteristic distance from the sequence involved in base pairing with the guide RNA. The polypeptide is Fibrillarin-like rRNA/tRNA 2'-O-methyltransferase (Methanoculleus marisnigri (strain ATCC 35101 / DSM 1498 / JR1)).